Reading from the N-terminus, the 637-residue chain is Chaperone protein DnaK (637 aa).

Residue Thr-198 is modified to Phosphothreonine; by autocatalysis. Residues 601 to 615 (AQQKAQAEQAGADAG) are compositionally biased toward low complexity. The interval 601–637 (AQQKAQAEQAGADAGEQPKQDDDVVDAEFEEVKEDKK) is disordered. The span at 623–637 (DVVDAEFEEVKEDKK) shows a compositional bias: acidic residues.

Belongs to the heat shock protein 70 family.

Its function is as follows. Acts as a chaperone. The chain is Chaperone protein DnaK from Vibrio atlanticus (strain LGP32) (Vibrio splendidus (strain Mel32)).